Consider the following 190-residue polypeptide: MTERIGPGAFVAVVGASGVGKDALMAYARERSEAVAHFPRRVITRPSGPGEDHEPVTEEQFTAARERGELAVWWPAHGLRYGIPASADVAVGAGRVVVANVSRAVLDELAGRYQRLVVVRVTVSDEVRAQRLRARGREPEPGIGQRLARPDPAPGHQADTVIQNDGTLADGGDQLLRVILDAAGAPLATG.

The segment at R135 to D159 is disordered.

Belongs to the ribose 1,5-bisphosphokinase family.

It catalyses the reaction alpha-D-ribose 1,5-bisphosphate + ATP = 5-phospho-alpha-D-ribose 1-diphosphate + ADP. Its pathway is metabolic intermediate biosynthesis; 5-phospho-alpha-D-ribose 1-diphosphate biosynthesis; 5-phospho-alpha-D-ribose 1-diphosphate from D-ribose 5-phosphate (route II): step 3/3. Functionally, catalyzes the phosphorylation of ribose 1,5-bisphosphate to 5-phospho-D-ribosyl alpha-1-diphosphate (PRPP). This chain is Ribose 1,5-bisphosphate phosphokinase PhnN, found in Pseudofrankia inefficax (strain DSM 45817 / CECT 9037 / DDB 130130 / EuI1c) (Frankia inefficax).